A 58-amino-acid chain; its full sequence is Sperm protamine P1 (58 aa).

Residues 1-58 (MARYRRRSRSRSRSRYGRRRRRSRSRRRRSRRRRRRRGRRGRGYHRRSPHRRRRRRRR) are disordered.

It belongs to the protamine P1 family. Testis.

The protein resides in the nucleus. Its subcellular location is the chromosome. In terms of biological role, protamines substitute for histones in the chromatin of sperm during the haploid phase of spermatogenesis. They compact sperm DNA into a highly condensed, stable and inactive complex. The chain is Sperm protamine P1 (PRM1) from Monodelphis domestica (Gray short-tailed opossum).